The sequence spans 169 residues: Inorganic pyrophosphatase (169 aa).

Lysine 26, arginine 40, and tyrosine 52 together coordinate substrate. Residues aspartate 62, aspartate 67, and aspartate 99 each coordinate Mg(2+). Tyrosine 138 contributes to the substrate binding site.

Belongs to the PPase family. In terms of assembly, homohexamer. Mg(2+) is required as a cofactor.

The protein localises to the cytoplasm. The enzyme catalyses diphosphate + H2O = 2 phosphate + H(+). Functionally, catalyzes the hydrolysis of inorganic pyrophosphate (PPi) forming two phosphate ions. In Thermoplasma volcanium (strain ATCC 51530 / DSM 4299 / JCM 9571 / NBRC 15438 / GSS1), this protein is Inorganic pyrophosphatase.